Here is a 1077-residue protein sequence, read N- to C-terminus: Mitogen-activated protein kinase kinase kinase 9 (1077 aa).

The tract at residues 1–40 is disordered; the sequence is MESSRSLLGCLASATAAPPGDDATGAGAEEEEDEEEAAAE. Residues 14–27 are compositionally biased toward low complexity; it reads ATAAPPGDDATGAG. A compositionally biased stretch (acidic residues) spans 28–38; that stretch reads AEEEEDEEEAA. Residues 45–109 form the SH3 domain; that stretch reads AALPYWTAVF…PSNYVTPRSA (65 aa). The 269-residue stretch at 137-405 folds into the Protein kinase domain; it reads LTLEEIIGIG…LTTIEESGFF (269 aa). ATP contacts are provided by residues 143-151 and lysine 164; that span reads IGIGGFGKV. The active-site Proton acceptor is aspartate 261. Threonine 297 and threonine 298 each carry phosphothreonine; by autocatalysis. Position 301 is a phosphoserine; by autocatalysis (serine 301). Threonine 305 is modified (phosphothreonine; by autocatalysis). Leucine-zipper regions lie at residues 423 to 444 and 458 to 479; these read IQEM…EEEL and LRRR…ELNI. Residues 491 to 503 are compositionally biased toward basic residues; the sequence is VKKRKGKFRKSRL. Disordered stretches follow at residues 491–511, 526–606, 646–713, 748–790, 860–971, and 986–1011; these read VKKR…GNRI, SPTM…TSGD, EDED…KRGG, LPPE…KKEE, RDPN…PRPS, and SHAR…CFAS. At serine 526 the chain carries Phosphoserine. 2 stretches are compositionally biased toward polar residues: residues 559–568 and 693–709; these read PGESSKTWGR and PVNS…TNSL. The span at 755–767 shows a compositional bias: basic and acidic residues; sequence PPAREEKKRREGL. Residues 863–880 show a composition bias toward polar residues; it reads NQSLTPTHVTLTAPTQPS. A compositionally biased stretch (low complexity) spans 901 to 915; it reads GSRSPSSNGMSPSPG. A compositionally biased stretch (polar residues) spans 987–1011; it reads HARSASPANSSSTETPSNLDSCFAS.

The protein belongs to the protein kinase superfamily. STE Ser/Thr protein kinase family. MAP kinase kinase kinase subfamily. As to quaternary structure, homodimer. Mg(2+) serves as cofactor. Autophosphorylation on serine and threonine residues within the activation loop plays a role in enzyme activation. Thr-305 is likely to be the main autophosphorylation site. Autophosphorylation also occurs on Thr-297 and Ser-301. Expressed in cochlea and utricle.

The enzyme catalyses L-seryl-[protein] + ATP = O-phospho-L-seryl-[protein] + ADP + H(+). It catalyses the reaction L-threonyl-[protein] + ATP = O-phospho-L-threonyl-[protein] + ADP + H(+). With respect to regulation, homodimerization via the leucine zipper domains is required for autophosphorylation of multiple sites in the activation loop and subsequent activation. Autophosphorylation at Thr-305 is the key step in activation of MAP3K9/MLK1 and is required for full phosphorylation. Autophosphorylation at Thr-297 and Ser-301 have been shown to be of secondary importance in the activation of MAP3K9/MLK1. Functionally, serine/threonine kinase which acts as an essential component of the MAP kinase signal transduction pathway. Plays an important role in the cascades of cellular responses evoked by changes in the environment. Once activated, acts as an upstream activator of the MKK/JNK signal transduction cascade through the phosphorylation of MAP2K4/MKK4 and MAP2K7/MKK7 which in turn activate the JNKs. The MKK/JNK signaling pathway regulates stress response via activator protein-1 (JUN) and GATA4 transcription factors. Also plays a role in mitochondrial death signaling pathway, including the release cytochrome c, leading to apoptosis. This chain is Mitogen-activated protein kinase kinase kinase 9 (Map3k9), found in Mus musculus (Mouse).